A 254-amino-acid chain; its full sequence is Ribonuclease HII (254 aa).

The region spanning Lys46 to Val234 is the RNase H type-2 domain. Positions 52, 53, and 144 each coordinate a divalent metal cation.

It belongs to the RNase HII family. Mn(2+) serves as cofactor. The cofactor is Mg(2+).

It is found in the cytoplasm. It carries out the reaction Endonucleolytic cleavage to 5'-phosphomonoester.. Endonuclease that specifically degrades the RNA of RNA-DNA hybrids. The sequence is that of Ribonuclease HII from Koribacter versatilis (strain Ellin345).